A 78-amino-acid polypeptide reads, in one-letter code: D-alanyl carrier protein (78 aa).

The 78-residue stretch at 1–78 folds into the Carrier domain; it reads MDFNQEVLSV…QIIKQLNELR (78 aa). An O-(pantetheine 4'-phosphoryl)serine modification is found at Ser-36.

The protein belongs to the DltC family. In terms of processing, 4'-phosphopantetheine is transferred from CoA to a specific serine of apo-DCP.

It is found in the cytoplasm. It participates in cell wall biogenesis; lipoteichoic acid biosynthesis. In terms of biological role, carrier protein involved in the D-alanylation of lipoteichoic acid (LTA). The loading of thioester-linked D-alanine onto DltC is catalyzed by D-alanine--D-alanyl carrier protein ligase DltA. The DltC-carried D-alanyl group is further transferred to cell membrane phosphatidylglycerol (PG) by forming an ester bond, probably catalyzed by DltD. D-alanylation of LTA plays an important role in modulating the properties of the cell wall in Gram-positive bacteria, influencing the net charge of the cell wall. In Bacillus licheniformis (strain ATCC 14580 / DSM 13 / JCM 2505 / CCUG 7422 / NBRC 12200 / NCIMB 9375 / NCTC 10341 / NRRL NRS-1264 / Gibson 46), this protein is D-alanyl carrier protein.